A 1004-amino-acid chain; its full sequence is Glutamate [NMDA] receptor subunit 1 (1004 aa).

The N-terminal stretch at 1–39 is a signal peptide; sequence MAGTDSPAAARFVYRCLLFAPAIVVGLLLPLTLPPIAAA. Residues 40 to 585 lie on the Extracellular side of the membrane; that stretch reads QRHTASDNPS…TLVSFLQPFS (546 aa). N-linked (GlcNAc...) asparagine glycosylation is found at Asn-270, Asn-326, Asn-357, Asn-409, Asn-466, Asn-493, and Asn-513. Glycine-binding positions include 542–544 and Arg-549; that span reads PLT. A helical transmembrane segment spans residues 586–606; sequence NTLWILVMVSVHVVALVLYLL. Over 607-663 the chain is Cytoplasmic; that stretch reads DRFSPFGRFKLSHSDSNEEKALNLSSAVWFAWGVLLNSGIGEGTPRSFSARVLGMVW. The helical transmembrane segment at 664 to 684 threads the bilayer; it reads AGFAMIIVASYTANLAAFLVL. Residues 685–843 are Extracellular-facing; sequence ERPKTKLSGI…KTPNTLGLKN (159 aa). N-linked (GlcNAc...) asparagine glycosylation occurs at Asn-705. Residues Ser-715 and Asp-759 each contribute to the glycine site. A helical membrane pass occupies residues 844-864; that stretch reads MAGVFILVGVGIAGGVGLIII. Topologically, residues 865–1004 are cytoplasmic; that stretch reads EVIYKKHQVK…YTSDVSHLVV (140 aa). Residues 980-1004 are disordered; that stretch reads TRPQQNILPPRYSPGYTSDVSHLVV. Positions 994–1004 are enriched in polar residues; sequence GYTSDVSHLVV.

This sequence belongs to the glutamate-gated ion channel (TC 1.A.10.1) family. As to quaternary structure, forms a heteromeric NMDA channel with Nmdar2.

It localises to the cell membrane. The protein resides in the postsynaptic cell membrane. The protein localises to the postsynaptic density. In terms of biological role, NMDA receptor subtype of glutamate-gated ion channels with high calcium permeability and voltage-dependent sensitivity to magnesium. Mediated by glycine. This protein plays a key role in synaptic plasticity, synaptogenesis, excitotoxicity, memory acquisition and learning. It mediates neuronal functions in glutamate neurotransmission. Is involved in the cell surface targeting of NMDA receptors. Plays a role in associative learning and in long-term memory consolidation. This Drosophila persimilis (Fruit fly) protein is Glutamate [NMDA] receptor subunit 1.